Here is a 165-residue protein sequence, read N- to C-terminus: UPF0303 protein Bcenmc03_1534 (165 aa).

This sequence belongs to the UPF0303 family.

The polypeptide is UPF0303 protein Bcenmc03_1534 (Burkholderia orbicola (strain MC0-3)).